Here is a 247-residue protein sequence, read N- to C-terminus: Adenosylcobinamide-GDP ribazoletransferase (247 aa).

6 consecutive transmembrane segments (helical) span residues 34–54 (IVMF…IFIL), 59–79 (CGIP…TGGF), 113–133 (GGLA…ELAL), 138–158 (MLAA…LLMY), 171–191 (VFIG…AVIV), and 194–214 (VLLP…AIFI).

The protein belongs to the CobS family. Mg(2+) serves as cofactor.

The protein resides in the cell inner membrane. The enzyme catalyses alpha-ribazole + adenosylcob(III)inamide-GDP = adenosylcob(III)alamin + GMP + H(+). The catalysed reaction is alpha-ribazole 5'-phosphate + adenosylcob(III)inamide-GDP = adenosylcob(III)alamin 5'-phosphate + GMP + H(+). It participates in cofactor biosynthesis; adenosylcobalamin biosynthesis; adenosylcobalamin from cob(II)yrinate a,c-diamide: step 7/7. Its function is as follows. Joins adenosylcobinamide-GDP and alpha-ribazole to generate adenosylcobalamin (Ado-cobalamin). Also synthesizes adenosylcobalamin 5'-phosphate from adenosylcobinamide-GDP and alpha-ribazole 5'-phosphate. The polypeptide is Adenosylcobinamide-GDP ribazoletransferase (Salmonella schwarzengrund (strain CVM19633)).